Consider the following 141-residue polypeptide: Hemoglobin subunit alpha (141 aa).

One can recognise a Globin domain in the interval 1-141 (VLSPADKTNV…VSTVLTSKYR (141 aa)). Phosphoserine is present on Ser-3. Lys-7 bears the N6-succinyllysine mark. Residue Thr-8 is modified to Phosphothreonine. Lys-11 carries the N6-succinyllysine modification. Phosphoserine is present on Ser-35. Lys-40 is subject to N6-succinyllysine. Position 49 is a phosphoserine (Ser-49). His-58 provides a ligand contact to O2. His-87 serves as a coordination point for heme b. Ser-102 carries the post-translational modification Phosphoserine. Residue Thr-108 is modified to Phosphothreonine. Ser-124 carries the phosphoserine modification. A phosphothreonine mark is found at Thr-134 and Thr-137. Ser-138 bears the Phosphoserine mark.

Belongs to the globin family. Heterotetramer of two alpha chains and two beta chains. As to expression, red blood cells.

In terms of biological role, involved in oxygen transport from the lung to the various peripheral tissues. Hemopressin acts as an antagonist peptide of the cannabinoid receptor CNR1. Hemopressin-binding efficiently blocks cannabinoid receptor CNR1 and subsequent signaling. This Eulemur fulvus fulvus (Brown lemur) protein is Hemoglobin subunit alpha (HBA).